The chain runs to 326 residues: MDIKPEKYKPIKEEYIKSFKDMLLLRRFEEKCGQLYGMGKIGGFCHLYIGQEAVISAVAMIKKKGDSTITSYRDHAHIILAGTEPKYVLAELMGRATGCSKGKGGSMHLFDIPNKFYGGHGIVGAQVPIGTGLAFAEKYNGTNNICFTFLGDGAVNQGQVYEAFNMASLWGLPIVYIIENNEYSMGTSVARSTFMCDLYKKGESFGIRGFQLDGMDFEEMYNGTKQVAEYVRENSFPVILEVKTYRYRGHSMSDPAKYRSKEEVEKYKERDTLVRIREIILDNKYATEADLKAIEQSVREIIKVAVEFSENSPLPAEDELYTEIYV.

As to quaternary structure, heterodimer of an alpha and a beta chain. It depends on thiamine diphosphate as a cofactor.

The catalysed reaction is N(6)-[(R)-lipoyl]-L-lysyl-[protein] + pyruvate + H(+) = N(6)-[(R)-S(8)-acetyldihydrolipoyl]-L-lysyl-[protein] + CO2. The pyruvate dehydrogenase complex catalyzes the overall conversion of pyruvate to acetyl-CoA and CO(2). It contains multiple copies of three enzymatic components: pyruvate dehydrogenase (E1), dihydrolipoamide acetyltransferase (E2) and lipoamide dehydrogenase (E3). The polypeptide is Pyruvate dehydrogenase E1 component subunit alpha (pdhA) (Rickettsia prowazekii (strain Madrid E)).